Here is a 160-residue protein sequence, read N- to C-terminus: uncharacterized protein (160 aa).

A helical membrane pass occupies residues 47-67 (LLGGFANVAAILTPLVAVLAY).

It localises to the membrane. This is an uncharacterized protein from Sinorhizobium fredii (strain NBRC 101917 / NGR234).